Consider the following 168-residue polypeptide: Ribonuclease H (168 aa).

An RNase H type-1 domain is found at 10-151 (NNIPVKIYTD…ADKLATNGKI (142 aa)). Aspartate 19, glutamate 57, aspartate 79, and aspartate 143 together coordinate Mg(2+).

It belongs to the RNase H family. As to quaternary structure, monomer. The cofactor is Mg(2+).

It is found in the cytoplasm. The enzyme catalyses Endonucleolytic cleavage to 5'-phosphomonoester.. Functionally, endonuclease that specifically degrades the RNA of RNA-DNA hybrids. The polypeptide is Ribonuclease H (Orientia tsutsugamushi (strain Boryong) (Rickettsia tsutsugamushi)).